The sequence spans 81 residues: uncharacterized protein (81 aa).

This is an uncharacterized protein from Dictyostelium discoideum (Social amoeba).